The following is a 99-amino-acid chain: Integration host factor subunit alpha (99 aa).

The tract at residues 49-75 (FGNFDLRDKNQRPGRNPKTGEDIPITA) is disordered.

It belongs to the bacterial histone-like protein family. As to quaternary structure, heterodimer of an alpha and a beta chain.

In terms of biological role, this protein is one of the two subunits of integration host factor, a specific DNA-binding protein that functions in genetic recombination as well as in transcriptional and translational control. The protein is Integration host factor subunit alpha of Salmonella agona (strain SL483).